The sequence spans 205 residues: N-(5'-phosphoribosyl)anthranilate isomerase (205 aa).

The protein belongs to the TrpF family.

It catalyses the reaction N-(5-phospho-beta-D-ribosyl)anthranilate = 1-(2-carboxyphenylamino)-1-deoxy-D-ribulose 5-phosphate. The protein operates within amino-acid biosynthesis; L-tryptophan biosynthesis; L-tryptophan from chorismate: step 3/5. In Thermotoga petrophila (strain ATCC BAA-488 / DSM 13995 / JCM 10881 / RKU-1), this protein is N-(5'-phosphoribosyl)anthranilate isomerase.